The primary structure comprises 413 residues: E3 ubiquitin-protein ligase makorin (413 aa).

C3H1-type zinc fingers lie at residues 2–29 and 30–57; these read PRHE…HDVA and TRNE…HTRP. A disordered region spans residues 61 to 85; that stretch reads ELPSCSTPQTSQNQQNLQNSGQRVR. The segment covering 66–82 has biased composition (low complexity); that stretch reads STPQTSQNQQNLQNSGQ. The C3H1-type 3 zinc-finger motif lies at 138–167; the sequence is QAQLMMCPYHQKSGDCNRQDMDCPFAHGNY. The segment at 213 to 267 adopts an RING-type zinc-finger fold; that stretch reads CGICMENIFEKNLRFGILNGCQHCFCLDCIRQWRSKDQENVELATKTVRSCPECR. The C3H1-type 4 zinc-finger motif lies at 296-327; the sequence is NTKRKICKYYSNERSRGACPFGNKCFYKHQLP.

As to quaternary structure, component of a complex at least containing lep-2, lin-28 and the long non-coding RNA lep-5, which mediates the degradation of lin-28. In terms of tissue distribution, expressed in seam, tail tip, and other hypodermal cells, head and tail neurons, the pharynx, intestine and the developing hermaphrodite somatic gonad. Not expressed in body wall muscle cells.

It localises to the cytoplasm. The enzyme catalyses S-ubiquitinyl-[E2 ubiquitin-conjugating enzyme]-L-cysteine + [acceptor protein]-L-lysine = [E2 ubiquitin-conjugating enzyme]-L-cysteine + N(6)-ubiquitinyl-[acceptor protein]-L-lysine.. It functions in the pathway protein modification; protein ubiquitination. E3 ubiquitin ligase which catalyzes the covalent attachment of ubiquitin moieties onto substrate proteins. Promotes the larval to adult transition by binding to the long non-coding RNA lep-5 to target the heterochronic protein lin-28 for degradation by the proteasome. This association and degradation of lin-28 also controls the timing of the sexual differentiation of individual neurons in males including the AIM, AWA, ADF, ASJ and CEM neurons. Plays a role in governing the developmental timing of male tail tip morphogenesis. Plays a role in two aspects of male mating behavior: response to hermaphrodite contact and vulva location. May play a role in the detection of preferred food sources. The polypeptide is E3 ubiquitin-protein ligase makorin (Caenorhabditis elegans).